The primary structure comprises 275 residues: NH(3)-dependent NAD(+) synthetase (275 aa).

39 to 46 (GLSGGVDS) lines the ATP pocket. Asp45 lines the Mg(2+) pocket. A deamido-NAD(+)-binding site is contributed by Arg124. An ATP-binding site is contributed by Thr144. Glu149 is a binding site for Mg(2+). Deamido-NAD(+) is bound by residues Lys157 and Asp164. Residues Lys173 and Ser195 each contribute to the ATP site. 255–256 (HK) provides a ligand contact to deamido-NAD(+).

It belongs to the NAD synthetase family. In terms of assembly, homodimer.

The catalysed reaction is deamido-NAD(+) + NH4(+) + ATP = AMP + diphosphate + NAD(+) + H(+). Its pathway is cofactor biosynthesis; NAD(+) biosynthesis; NAD(+) from deamido-NAD(+) (ammonia route): step 1/1. Functionally, catalyzes the ATP-dependent amidation of deamido-NAD to form NAD. Uses ammonia as a nitrogen source. The protein is NH(3)-dependent NAD(+) synthetase of Staphylothermus marinus (strain ATCC 43588 / DSM 3639 / JCM 9404 / F1).